Here is a 110-residue protein sequence, read N- to C-terminus: Large ribosomal subunit protein uL22 (110 aa).

Belongs to the universal ribosomal protein uL22 family. In terms of assembly, part of the 50S ribosomal subunit.

Its function is as follows. This protein binds specifically to 23S rRNA; its binding is stimulated by other ribosomal proteins, e.g. L4, L17, and L20. It is important during the early stages of 50S assembly. It makes multiple contacts with different domains of the 23S rRNA in the assembled 50S subunit and ribosome. In terms of biological role, the globular domain of the protein is located near the polypeptide exit tunnel on the outside of the subunit, while an extended beta-hairpin is found that lines the wall of the exit tunnel in the center of the 70S ribosome. This chain is Large ribosomal subunit protein uL22, found in Haemophilus influenzae (strain 86-028NP).